A 774-amino-acid polypeptide reads, in one-letter code: C6 finger domain transcription factor nscR (774 aa).

The zn(2)-C6 fungal-type DNA-binding region spans 17 to 43 (CELCRERKIKCDKVDPCNNCVSAGVVC). Disordered stretches follow at residues 61–94 (RPMS…SGAV), 536–559 (LQLP…PQEH), and 665–697 (PTFS…SDLS). Positions 67–78 (FVPPRAPTPVAG) are enriched in pro residues. Residues 536–548 (LQLPQPSNGSSQP) are compositionally biased toward low complexity. A compositionally biased stretch (polar residues) spans 665-674 (PTFSLGSSTG). Over residues 675–697 (TSAAPTPRSRASSTPSDTLSDLS) the composition is skewed to low complexity.

It is found in the nucleus. Its function is as follows. Transcription factor that specifically regulates the neosartoricin biosynthesis gene cluster. This Aspergillus fumigatus (strain ATCC MYA-4609 / CBS 101355 / FGSC A1100 / Af293) (Neosartorya fumigata) protein is C6 finger domain transcription factor nscR.